The chain runs to 148 residues: UPF0178 protein EF_0842 (148 aa).

Belongs to the UPF0178 family.

The polypeptide is UPF0178 protein EF_0842 (Enterococcus faecalis (strain ATCC 700802 / V583)).